Consider the following 290-residue polypeptide: MKLAVYGKGGIGKSTTSCNISVALSKRGKKVLQIGCDPKHDSTFTLTGFLIPTIIDTLQAKDYHYEDVWPEDVIYKGYGGVDCVEAGGPPAGAGCGGYVVGETVKLLKELNAFDEYDIILFDVLGDVVCGGFAAPLNYADYCLIITDNGFDALFAANRIAASVREKARTHSLRLAGLVGNRTDKRDLIDKYIDCVPMPVLEVLPLIEDIRVSRVKGKTLFEMAESDTNLAYVCDYYLNIADQLIARPEGVVPKEAADRELFSLLSDFYLNPKSNTTKSTADEEELDLMMV.

Residues 10-15 (GIGKST) and lysine 39 contribute to the ATP site. Serine 14 is a Mg(2+) binding site. 2 residues coordinate [4Fe-4S] cluster: cysteine 95 and cysteine 129. An ATP-binding site is contributed by 180 to 181 (NR).

It belongs to the NifH/BchL/ChlL family. As to quaternary structure, homodimer. Protochlorophyllide reductase is composed of three subunits; ChlL, ChlN and ChlB. [4Fe-4S] cluster serves as cofactor.

It localises to the plastid. The protein localises to the chloroplast. It catalyses the reaction chlorophyllide a + oxidized 2[4Fe-4S]-[ferredoxin] + 2 ADP + 2 phosphate = protochlorophyllide a + reduced 2[4Fe-4S]-[ferredoxin] + 2 ATP + 2 H2O. Its pathway is porphyrin-containing compound metabolism; chlorophyll biosynthesis (light-independent). Component of the dark-operative protochlorophyllide reductase (DPOR) that uses Mg-ATP and reduced ferredoxin to reduce ring D of protochlorophyllide (Pchlide) to form chlorophyllide a (Chlide). This reaction is light-independent. The L component serves as a unique electron donor to the NB-component of the complex, and binds Mg-ATP. This is Light-independent protochlorophyllide reductase iron-sulfur ATP-binding protein from Porphyra purpurea (Red seaweed).